Reading from the N-terminus, the 67-residue chain is Kappa-scoloptoxin(04)-Ssd1b (67 aa).

The N-terminal stretch at 1–24 (MKKTCVVSVFLVLLLLKFHDLSMG) is a signal peptide. The propeptide occupies 25–36 (EEISPLKKVARR). Disulfide bonds link Cys-44–Cys-55 and Cys-49–Cys-62.

Expressed by the venom gland.

Its subcellular location is the secreted. This chain is Kappa-scoloptoxin(04)-Ssd1b, found in Scolopendra dehaani (Thai centipede).